The sequence spans 161 residues: MSKAFLDKFLNFIGFEEVEDSEKAPELSSSRETKTKNQNQSKSLLRSELTAVPAPRSTKIISTQPRTFTDVQTVAEHLKNGQPVVVNLSQVHPEEAQRILDYTSGVAFALDGSAKKINGEIFLFVPSGVDIVGAGDLRTFNENVEPLEEKVNSRWFKTETA.

The interval 19 to 47 (EDSEKAPELSSSRETKTKNQNQSKSLLRS) is disordered. Positions 21-35 (SEKAPELSSSRETKT) are enriched in basic and acidic residues.

The protein belongs to the SepF family. Homodimer. Interacts with FtsZ.

Its subcellular location is the cytoplasm. In terms of biological role, cell division protein that is part of the divisome complex and is recruited early to the Z-ring. Probably stimulates Z-ring formation, perhaps through the cross-linking of FtsZ protofilaments. Its function overlaps with FtsA. This is Cell division protein SepF 2 from Desulforamulus reducens (strain ATCC BAA-1160 / DSM 100696 / MI-1) (Desulfotomaculum reducens).